The primary structure comprises 307 residues: Pantothenate kinase (307 aa).

87–94 provides a ligand contact to ATP; it reads GSVAVGKS.

Belongs to the prokaryotic pantothenate kinase family.

The protein localises to the cytoplasm. It carries out the reaction (R)-pantothenate + ATP = (R)-4'-phosphopantothenate + ADP + H(+). Its pathway is cofactor biosynthesis; coenzyme A biosynthesis; CoA from (R)-pantothenate: step 1/5. The polypeptide is Pantothenate kinase (Vibrio vulnificus (strain CMCP6)).